We begin with the raw amino-acid sequence, 180 residues long: Acireductone dioxygenase (180 aa).

Fe(2+) contacts are provided by His97, His99, Glu103, and His141. Ni(2+) contacts are provided by His97, His99, Glu103, and His141.

The protein belongs to the acireductone dioxygenase (ARD) family. As to quaternary structure, monomer. The cofactor is Fe(2+). Requires Ni(2+) as cofactor.

It catalyses the reaction 1,2-dihydroxy-5-(methylsulfanyl)pent-1-en-3-one + O2 = 3-(methylsulfanyl)propanoate + CO + formate + 2 H(+). The enzyme catalyses 1,2-dihydroxy-5-(methylsulfanyl)pent-1-en-3-one + O2 = 4-methylsulfanyl-2-oxobutanoate + formate + 2 H(+). It participates in amino-acid biosynthesis; L-methionine biosynthesis via salvage pathway; L-methionine from S-methyl-5-thio-alpha-D-ribose 1-phosphate: step 5/6. Functionally, catalyzes 2 different reactions between oxygen and the acireductone 1,2-dihydroxy-3-keto-5-methylthiopentene (DHK-MTPene) depending upon the metal bound in the active site. Fe-containing acireductone dioxygenase (Fe-ARD) produces formate and 2-keto-4-methylthiobutyrate (KMTB), the alpha-ketoacid precursor of methionine in the methionine recycle pathway. Ni-containing acireductone dioxygenase (Ni-ARD) produces methylthiopropionate, carbon monoxide and formate, and does not lie on the methionine recycle pathway. The chain is Acireductone dioxygenase from Cronobacter sakazakii (Enterobacter sakazakii).